Reading from the N-terminus, the 317-residue chain is Beta-ketoacyl-[acyl-carrier-protein] synthase III (317 aa).

Active-site residues include cysteine 112 and histidine 244. Residues 245–249 (QANLR) are ACP-binding. Residue asparagine 274 is part of the active site.

The protein belongs to the thiolase-like superfamily. FabH family. As to quaternary structure, homodimer.

The protein localises to the cytoplasm. The enzyme catalyses malonyl-[ACP] + acetyl-CoA + H(+) = 3-oxobutanoyl-[ACP] + CO2 + CoA. It functions in the pathway lipid metabolism; fatty acid biosynthesis. Functionally, catalyzes the condensation reaction of fatty acid synthesis by the addition to an acyl acceptor of two carbons from malonyl-ACP. Catalyzes the first condensation reaction which initiates fatty acid synthesis and may therefore play a role in governing the total rate of fatty acid production. Possesses both acetoacetyl-ACP synthase and acetyl transacylase activities. Its substrate specificity determines the biosynthesis of branched-chain and/or straight-chain of fatty acids. The polypeptide is Beta-ketoacyl-[acyl-carrier-protein] synthase III (Shigella boydii serotype 4 (strain Sb227)).